The following is a 612-amino-acid chain: Apoptosis-inducing factor 1, mitochondrial (612 aa).

2 short sequence motifs (mitochondrial localization signal) span residues Met-1–Arg-30 and Lys-62–Lys-88. A mitochondrion-targeting transit peptide spans Met-1–Met-53. 2 consecutive propeptides (removed in mature form) follow at residues Ala-54 to Gly-100 and Ser-55 to Leu-101. Lys-108 is modified (N6-succinyllysine). Ser-115 is modified (phosphoserine). The FAD-dependent oxidoreductase stretch occupies residues Phe-133–Trp-482. Residues Gly-137–Ala-141, Glu-163–Asp-164, Arg-171, and Lys-176 contribute to the FAD site. Trp-195 is a binding site for NAD(+). An FAD-binding site is contributed by Val-232. A Glycyl lysine isopeptide (Lys-Gly) (interchain with G-Cter in ubiquitin) cross-link involves residue Lys-254. Ser-267 bears the Phosphoserine mark. Position 284 (Arg-284) interacts with FAD. NAD(+) is bound by residues Gly-307–Leu-310, Glu-335, and Lys-341. Ser-370 carries the post-translational modification Phosphoserine. N6-acetyllysine is present on Lys-387. NAD(+) is bound at residue Gly-398. Asp-437 contributes to the FAD binding site. A Nuclear localization signal motif is present at residues Lys-445–Arg-450. NAD(+) is bound by residues Glu-452–His-453, Trp-482, and Glu-492. FAD contacts are provided by residues His-453–His-454 and Trp-482. Polar residues predominate over residues Ala-512–Arg-528. The tract at residues Ala-512–Gln-551 is disordered. Residue Thr-520 is modified to Phosphothreonine. Phosphoserine occurs at positions 523 and 529. Position 582 (Asn-582) interacts with NAD(+). At Lys-592 the chain carries N6-acetyllysine.

The protein belongs to the FAD-dependent oxidoreductase family. Monomer (oxidized form). Homodimer (reduced form). Upon reduction with NADH, undergoes dimerization and forms tight, long-lived FADH2-NAD charge transfer complexes (CTC) resistant to oxidation. Also dimerizes with isoform 3 preventing its release from mitochondria. Interacts with XIAP/BIRC4. Interacts (via N-terminus) with EIF3G (via C-terminus). Interacts with PRELID1. Interacts with CHCHD4; the interaction increases in presence of NADH. Interacts with processed form of PARP1 (Poly [ADP-ribose] polymerase 1, processed C-terminus); interaction is mediated with poly-ADP-ribose chains attached to PARP1, promoting translocation into the nucleus. FAD is required as a cofactor. Post-translationally, under normal conditions, a 54-residue N-terminal segment is first proteolytically removed during or just after translocation into the mitochondrial intermembrane space (IMS) by the mitochondrial processing peptidase (MPP) to form the inner-membrane-anchored mature form (AIFmit). During apoptosis, it is further proteolytically processed at amino-acid position 101 leading to the generation of the mature form, which is confined to the mitochondrial IMS in a soluble form (AIFsol). AIFsol is released to the cytoplasm in response to specific death signals, and translocated to the nucleus, where it induces nuclear apoptosis in a caspase-independent manner. Ubiquitination by XIAP/BIRC4 does not lead to proteasomal degradation. Ubiquitination at Lys-254 by XIAP/BIRC4 blocks its ability to bind DNA and induce chromatin degradation, thereby inhibiting its ability to induce cell death.

It is found in the mitochondrion intermembrane space. It localises to the mitochondrion inner membrane. The protein resides in the cytoplasm. The protein localises to the nucleus. Its subcellular location is the perinuclear region. The catalysed reaction is A + NADH + H(+) = AH2 + NAD(+). In terms of biological role, functions both as NADH oxidoreductase and as regulator of apoptosis. In response to apoptotic stimuli, it is released from the mitochondrion intermembrane space into the cytosol and to the nucleus, where it functions as a proapoptotic factor in a caspase-independent pathway. Release into the cytoplasm is mediated upon binding to poly-ADP-ribose chains. The soluble form (AIFsol) found in the nucleus induces 'parthanatos' i.e. caspase-independent fragmentation of chromosomal DNA. Binds to DNA in a sequence-independent manner. Interacts with EIF3G, and thereby inhibits the EIF3 machinery and protein synthesis, and activates caspase-7 to amplify apoptosis. Plays a critical role in caspase-independent, pyknotic cell death in hydrogen peroxide-exposed cells. In contrast, participates in normal mitochondrial metabolism. Plays an important role in the regulation of respiratory chain biogenesis by interacting with CHCHD4 and controlling CHCHD4 mitochondrial import. In Rattus norvegicus (Rat), this protein is Apoptosis-inducing factor 1, mitochondrial (Aifm1).